The primary structure comprises 1003 residues: X-linked retinitis pigmentosa GTPase regulator (1003 aa).

RCC1 repeat units lie at residues 54–105 (NKLY…STEG), 106–158 (GKVY…LTED), 159–208 (GELF…VTTE), 209–261 (GQLY…LTEK), 262–313 (AVYT…ITDM), and 314–367 (GLMY…FATP). Residue serine 418 is modified to Phosphoserine. Residues 460–495 (TPEKEGLTQPEPDYFRDNMAKGKETDNSSATDSESL) are disordered. The segment covering 472–485 (DYFRDNMAKGKETD) has biased composition (basic and acidic residues). Polar residues predominate over residues 486–495 (NSSATDSESL). Phosphoserine is present on serine 520. 4 disordered regions span residues 625-657 (FKAI…LAEM), 691-760 (ESKD…TDQN), 794-932 (LSEI…DVKK), and 968-1003 (AFKG…CTIL). Basic and acidic residues predominate over residues 693-715 (KDFVKDSRRNKQDVIFDSERESI). Composition is skewed to acidic residues over residues 716 to 726 (EEPDSYLEGES) and 797 to 821 (IPEE…EANE). Over residues 827–848 (AGKEEKEIEILSDDLTDRAEDH) the composition is skewed to basic and acidic residues. Residues 849–867 (EFSEDEEPEDMAEELDEDL) are compositionally biased toward acidic residues. A compositionally biased stretch (basic and acidic residues) spans 882 to 896 (SLKKDETTKQEKRAI). Low complexity predominate over residues 913 to 924 (SSSSEVLNDSES). Over residues 978-989 (QNHMGQNHQDTS) the composition is skewed to polar residues. Residue cysteine 1000 is modified to Cysteine methyl ester. Cysteine 1000 is lipidated: S-geranylgeranyl cysteine. Positions 1001–1003 (TIL) are cleaved as a propeptide — removed in mature form.

As to quaternary structure, interacts with PDE6D. Interacts with RPGRIP1. Interacts with RPGRIP1L. PDE6D, RPGRIP1 and RPGRIP1L may compete for the same binding sites. Interacts with NPM1. Interacts with SMC1A and SMC3. Interacts with CEP290. Interacts with WHRN. Interacts with SPATA7. Interacts with RAB37 and RAB8A (in GDP-bound forms); functions as GEF for RAB37 and RAB8A. In terms of processing, prenylated. Isoform 1 is expressed exclusively in testis. Isoforms 2, 3 and 4 are widely expressed.

The protein localises to the golgi apparatus. Its subcellular location is the cell projection. The protein resides in the cilium. It is found in the cytoplasm. It localises to the cytoskeleton. The protein localises to the cilium basal body. Its subcellular location is the microtubule organizing center. The protein resides in the centrosome. It is found in the cilium axoneme. It localises to the flagellum axoneme. In terms of biological role, acts as a guanine-nucleotide releasing factor (GEF) for RAB8A and RAB37 by promoting the conversion of inactive RAB-GDP to the active form RAB-GTP. GEF activity towards RAB8A may facilitate ciliary trafficking by modulating ciliary intracellular localization of RAB8A. GEF activity towards RAB37 maintains autophagic homeostasis and retinal function. Involved in photoreceptor integrity. May control cilia formation by regulating actin stress filaments and cell contractility. May be involved in microtubule organization and regulation of transport in primary cilia. May play a critical role in spermatogenesis and in intraflagellar transport processes. The polypeptide is X-linked retinitis pigmentosa GTPase regulator (RPGR) (Canis lupus familiaris (Dog)).